We begin with the raw amino-acid sequence, 221 residues long: Pre-rRNA-processing protein SRD1 (221 aa).

The span at 101–110 shows a compositional bias: polar residues; it reads SKNRVTSACN. Disordered stretches follow at residues 101–121 and 137–161; these read SKNR…QEAN and ASIT…TILP. The segment covering 142–155 has biased composition (basic residues); it reads KYSKKTTSRPKREK. The GATA-type zinc-finger motif lies at 168-193; the sequence is CSKCKDTWTIQWRSGPDQNRELCSPC. The interval 201–221 is disordered; the sequence is LKKENEKKRQAADKRIDRNNP. The segment covering 203–221 has biased composition (basic and acidic residues); it reads KENEKKRQAADKRIDRNNP.

The protein resides in the cytoplasm. Its subcellular location is the nucleus. In terms of biological role, plays a direct or indirect role in pre-rRNA processing. The protein is Pre-rRNA-processing protein SRD1 (SRD1) of Saccharomyces cerevisiae (strain ATCC 204508 / S288c) (Baker's yeast).